We begin with the raw amino-acid sequence, 182 residues long: UPF0397 protein BCG9842_B2659 (182 aa).

Helical transmembrane passes span 9-29 (VVAI…GFSI), 40-60 (AILT…IGLI), 71-91 (WGIW…MGLI), 114-134 (ITGL…DIIV), and 142-162 (IVIQ…VLGL).

The protein belongs to the UPF0397 family.

It localises to the cell membrane. In Bacillus cereus (strain G9842), this protein is UPF0397 protein BCG9842_B2659.